Reading from the N-terminus, the 353-residue chain is DNA replication and repair protein RecF (353 aa).

Position 30–37 (30–37 (GANGQGKT)) interacts with ATP.

It belongs to the RecF family.

The protein resides in the cytoplasm. The RecF protein is involved in DNA metabolism; it is required for DNA replication and normal SOS inducibility. RecF binds preferentially to single-stranded, linear DNA. It also seems to bind ATP. The polypeptide is DNA replication and repair protein RecF (Carboxydothermus hydrogenoformans (strain ATCC BAA-161 / DSM 6008 / Z-2901)).